The sequence spans 224 residues: PKHD-type hydroxylase tll1907 (224 aa).

Positions 77 to 176 (KIIGPLLFSR…RLVAVAWVQS (100 aa)) constitute a Fe2OG dioxygenase domain. Fe cation is bound by residues His-96, Asp-98, and His-157. Arg-167 is a binding site for 2-oxoglutarate.

It depends on Fe(2+) as a cofactor. L-ascorbate is required as a cofactor.

This Thermosynechococcus vestitus (strain NIES-2133 / IAM M-273 / BP-1) protein is PKHD-type hydroxylase tll1907.